The primary structure comprises 413 residues: Serpin A12 (413 aa).

Positions 1–20 (MTRMLDLGLFLAGLLTVKGL) are cleaved as a signal peptide. N92 and N267 each carry an N-linked (GlcNAc...) asparagine glycan. Residues 364-382 (GMEGAAGSGAQTLPMETPR) are reactive center loop.

This sequence belongs to the serpin family. In terms of assembly, forms a stable complex with KLK7. Post-translationally, glycosylation slightly decreases affinity for heparin, but otherwise has no significant effect on KLK7 inhibitory activity or thermal stability of the protein. In terms of tissue distribution, expressed in visceral adipose tissues.

The protein resides in the secreted. Inhibition of KLK7 is enhanced by heparin. Adipokine that modulates insulin action by specifically inhibiting its target protease KLK7 in white adipose tissues. The polypeptide is Serpin A12 (Serpina12) (Mus musculus (Mouse)).